A 152-amino-acid polypeptide reads, in one-letter code: FMN reductase (NADH) RutF (152 aa).

Belongs to the non-flavoprotein flavin reductase family. RutF subfamily.

The enzyme catalyses FMNH2 + NAD(+) = FMN + NADH + 2 H(+). In terms of biological role, catalyzes the reduction of FMN to FMNH2 which is used to reduce pyrimidine by RutA via the Rut pathway. The polypeptide is FMN reductase (NADH) RutF (Shigella flexneri).